We begin with the raw amino-acid sequence, 479 residues long: MNIVENEICIRTLIDDDFPLMLKWLTDERVLEFYGGRDKKYTLESLKKHYTEPWEDEVFRVIIEYNNVPIGYGQIYKMYDELYTDYHYPKTDEIVYGMDQFIGEPNYWSKGIGTRYIKLIFEFLKKERNANAVILDPHKNNPRAIRAYQKSGFRIIEDLPEHELHEGKKEDCYLMEYRYDDNATNVKAMKYLIEHYFDNFKVDSIEIIGSGYDSVAYLVNNEYIFKTKFSTNKKKGYAKEKAIYNFLNTNLETNVKIPNIEYSYISDELSILGYKEIKGTFLTPEIYSTMSEEEQNLLKRDIASFLRQMHGLDYTDISECTIDNKQNVLEEYILLRETIYNDLTDIEKDYIESFMERLNATTVFEGKKCLCHNDFSCNHLLLDGNNRLTGIIDFGDSGIIDEYCDFIYLLEDSEEEIGTNFGEDILRMYGNIDIEKAKEYQDIVEEYYPIETIVYGIKNIKQEFIENGRKEIYKRTYKD.

Positions 8 to 180 (ICIRTLIDDD…DCYLMEYRYD (173 aa)) constitute an N-acetyltransferase domain. Positions 110–153 (KGIGTRYIKLIFEFLKKERNANAVILDPHKNNPRAIRAYQKSGF) are acetyl-CoA binding site. The active-site Proton acceptor; for phosphotransferase activity is Asp-374. Asp-393 contacts a gentamycin.

The protein in the C-terminal section; belongs to the aminoglycoside phosphotransferase family.

Its subcellular location is the cytoplasm. The catalysed reaction is a gentamycin + GTP = a gentamycin 2''-phosphate + GDP + H(+). Involved in resistance to gentamicin, tobramycin, and kanamycin. Tobramycin and kanamycin resistance is due to the ACC activity, specified by N-terminal region. The C-terminal region is a kinase that phosphorylates several 4,6-disubstituted aminoglycosides. This Enterococcus faecalis (strain ATCC 700802 / V583) protein is Bifunctional AAC/APH (aacA-aphD).